The primary structure comprises 180 residues: Large ribosomal subunit protein uL5 (180 aa).

This sequence belongs to the universal ribosomal protein uL5 family. Part of the 50S ribosomal subunit; part of the 5S rRNA/L5/L18/L25 subcomplex. Contacts the 5S rRNA and the P site tRNA. Forms a bridge to the 30S subunit in the 70S ribosome.

This is one of the proteins that bind and probably mediate the attachment of the 5S RNA into the large ribosomal subunit, where it forms part of the central protuberance. In the 70S ribosome it contacts protein S13 of the 30S subunit (bridge B1b), connecting the 2 subunits; this bridge is implicated in subunit movement. Contacts the P site tRNA; the 5S rRNA and some of its associated proteins might help stabilize positioning of ribosome-bound tRNAs. This is Large ribosomal subunit protein uL5 from Streptococcus thermophilus (strain CNRZ 1066).